The chain runs to 118 residues: MLTNYAFIGIFALAAITFPLLPLVLSAFLRPNRPTPVKLSTYECGLEAIGDIWVQFKVQYYLYALAFVIFDIETVFLYPWAVAYGQLGLFALFEMVVFLAILTIGLVYAWKKGALEWI.

3 helical membrane passes run 5–25 (YAFIGIFALAAITFPLLPLVL), 62–82 (LYALAFVIFDIETVFLYPWAV), and 87–107 (LGLFALFEMVVFLAILTIGLV).

This sequence belongs to the complex I subunit 3 family. NDH-1 is composed of 14 different subunits. Subunits NuoA, H, J, K, L, M, N constitute the membrane sector of the complex.

Its subcellular location is the cell membrane. It carries out the reaction a quinone + NADH + 5 H(+)(in) = a quinol + NAD(+) + 4 H(+)(out). Functionally, NDH-1 shuttles electrons from NADH, via FMN and iron-sulfur (Fe-S) centers, to quinones in the respiratory chain. The immediate electron acceptor for the enzyme in this species is believed to be ubiquinone. Couples the redox reaction to proton translocation (for every two electrons transferred, four hydrogen ions are translocated across the cytoplasmic membrane), and thus conserves the redox energy in a proton gradient. This Herpetosiphon aurantiacus (strain ATCC 23779 / DSM 785 / 114-95) protein is NADH-quinone oxidoreductase subunit A.